The sequence spans 272 residues: Ribosomal RNA large subunit methyltransferase E (272 aa).

Residues Gly-50, Trp-52, Asp-68, Asp-84, and Asp-109 each contribute to the S-adenosyl-L-methionine site. Catalysis depends on Lys-149, which acts as the Proton acceptor. One can recognise a TRAM domain in the interval 196–254; sequence PLRRGDKFVVDIEKLGSGGDGAVLIEGFVVFVKEVEVGEKVRIKIADVKPNFAFADVEE.

It belongs to the class I-like SAM-binding methyltransferase superfamily. RNA methyltransferase RlmE family.

It localises to the cytoplasm. It carries out the reaction uridine(2552) in 23S rRNA + S-adenosyl-L-methionine = 2'-O-methyluridine(2552) in 23S rRNA + S-adenosyl-L-homocysteine + H(+). In terms of biological role, specifically methylates the uridine in position 2552 of 23S rRNA at the 2'-O position of the ribose in the fully assembled 50S ribosomal subunit. This Methanosarcina acetivorans (strain ATCC 35395 / DSM 2834 / JCM 12185 / C2A) protein is Ribosomal RNA large subunit methyltransferase E.